Consider the following 152-residue polypeptide: Psoriasis susceptibility 1 candidate gene 1 protein homolog (152 aa).

The span at 1-31 shows a compositional bias: polar residues; it reads MTCTDQKSHSQRALGTQTPALQGPQLLNTDP. Disordered regions lie at residues 1 to 39 and 132 to 152; these read MTCTDQKSHSQRALGTQTPALQGPQLLNTDPSSEETRPP and APTLLYSPPPSHSPFGLSSLI.

The protein is Psoriasis susceptibility 1 candidate gene 1 protein homolog (PSORS1C1) of Pan troglodytes (Chimpanzee).